Here is a 500-residue protein sequence, read N- to C-terminus: Recombining binding protein suppressor of hairless (500 aa).

The tract at residues 1 to 30 (MDHTEGSPAEEPPAHAPSPGKFGERPPPKR) is disordered. DNA-binding stretches follow at residues 57–67 (QKSYGNEKRFF) and 165–170 (SKPSKK). Lys-175 carries the N6-acetyllysine modification. The interval 192–197 (RLRSQT) is DNA-binding. The IPT/TIG domain maps to 355–445 (PVVESLQLNG…YSTSLTFTYT (91 aa)). Residues 465–481 (SSQVPPNESNTNSEGSY) show a composition bias toward polar residues. Residues 465 to 500 (SSQVPPNESNTNSEGSYTNASTNSTSVTSSTATVVS) are disordered. Residues 482-500 (TNASTNSTSVTSSTATVVS) are compositionally biased toward low complexity.

It belongs to the Su(H) family. As to quaternary structure, interacts with activated NOTCH1, NOTCH2 or NOTCH3. Interacts with MINT/SHARP. This interaction may mediate the recruitment of large corepressor complexes containing proteins such as HDAC1, HDAC2, NCOR2, SAP30, FHL1/KYOT2 and CIR1. Interacts with EP300, MAML1 and PTF1A. Interacts with RITA1/C12orf52, leading to nuclear export, prevent the interaction between RBPJ and NICD product and subsequent down-regulation of the Notch signaling pathway. Interacts with SNW1. Interacts with CHCHD2 and CXXC5. Interacts with BEND6 (via BEN domain). Interacts with NKAPL. Interacts with ZMIZ1. Interacts with RBM15. Interacts with L3MBTL3 and KDM1A; the interaction with KDM1A is weaker in the absence of L3MBTL3 and the interaction with L3MBTL3 is impaired by Notch-derived peptide containing the intracellular domain (NICD). (Microbial infection) Interacts with EBV EBNA2. Interacts with EBV EBNA3. Interacts with EBV EBNA4. Interacts with EBV EBNA6 (via N-terminus).

The protein localises to the nucleus. The protein resides in the cytoplasm. Functionally, transcriptional regulator that plays a central role in Notch signaling, a signaling pathway involved in cell-cell communication that regulates a broad spectrum of cell-fate determinations. Acts as a transcriptional repressor when it is not associated with Notch proteins. When associated with some NICD product of Notch proteins (Notch intracellular domain), it acts as a transcriptional activator that activates transcription of Notch target genes. Probably represses or activates transcription via the recruitment of chromatin remodeling complexes containing histone deacetylase or histone acetylase proteins, respectively. Specifically binds to the immunoglobulin kappa-type J segment recombination signal sequence. Binds specifically to methylated DNA. Binds to the oxygen responsive element of COX4I2 and activates its transcription under hypoxia conditions (4% oxygen). Negatively regulates the phagocyte oxidative burst in response to bacterial infection by repressing transcription of NADPH oxidase subunits. This chain is Recombining binding protein suppressor of hairless, found in Homo sapiens (Human).